A 116-amino-acid chain; its full sequence is uncharacterized protein (116 aa).

Residues 6 to 83 (ATVHVGNLAP…RCIRVSPANF (78 aa)) enclose the RRM domain.

The protein resides in the cytoplasm. It localises to the nucleus. This is an uncharacterized protein from Schizosaccharomyces pombe (strain 972 / ATCC 24843) (Fission yeast).